The following is a 1028-amino-acid chain: Serine/threonine-protein kinase fray2 (1028 aa).

A disordered region spans residues 1-67; the sequence is MSDDKYHHDK…PKPRKNYPNS (67 aa). The span at 20 to 54 shows a compositional bias: low complexity; that stretch reads KQSTAAALSSSSTLASSSSMTTTTTTTSTTTTAAS. One can recognise a Protein kinase domain in the interval 71-330; it reads YELKETIGKG…PSKLLEHRFF (260 aa). Residues 77-85 and K100 contribute to the ATP site; that span reads IGKGGSGLV. D195 serves as the catalytic Proton acceptor. T230 is subject to Phosphothreonine; by autocatalysis. Over residues 368-381 the composition is skewed to polar residues; it reads TSSPQFDTGHSNSA. Disordered stretches follow at residues 368–467, 486–561, and 580–914; these read TSSP…STVV, AYHQ…LQQP, and DLIT…IQSK. 2 stretches are compositionally biased toward low complexity: residues 387–419 and 432–458; these read PNEN…NNNN and TPSH…SNHT. Polar residues-rich tracts occupy residues 503–518 and 528–542; these read IPNH…SAHS and IHPT…VVNN. Residues 543–561 show a composition bias toward low complexity; the sequence is TQQPQTLQPPQQQHQLQQP. Over residues 595–616 the composition is skewed to polar residues; that stretch reads IPSSSSHGNIPSLVTTSPKSPL. Low complexity-rich tracts occupy residues 617-642 and 683-700; these read QHQQ…ISSN and SSRA…SHTS. 4 stretches are compositionally biased toward basic and acidic residues: residues 701-714, 728-742, 753-855, and 865-893; these read SSDE…SDRK, SKRD…DRSN, VSRD…DRSR, and SRDS…DYKS.

Belongs to the protein kinase superfamily. STE Ser/Thr protein kinase family. STE20 subfamily. It depends on Mn(2+) as a cofactor. In terms of processing, undergoes autophosphorylation in the catalytic domain.

It carries out the reaction L-seryl-[protein] + ATP = O-phospho-L-seryl-[protein] + ADP + H(+). It catalyses the reaction L-threonyl-[protein] + ATP = O-phospho-L-threonyl-[protein] + ADP + H(+). The protein is Serine/threonine-protein kinase fray2 of Dictyostelium discoideum (Social amoeba).